Consider the following 104-residue polypeptide: Large ribosomal subunit protein uL24 (104 aa).

This sequence belongs to the universal ribosomal protein uL24 family. As to quaternary structure, part of the 50S ribosomal subunit.

Its function is as follows. One of two assembly initiator proteins, it binds directly to the 5'-end of the 23S rRNA, where it nucleates assembly of the 50S subunit. Functionally, one of the proteins that surrounds the polypeptide exit tunnel on the outside of the subunit. This is Large ribosomal subunit protein uL24 from Pectobacterium carotovorum subsp. carotovorum (strain PC1).